A 353-amino-acid polypeptide reads, in one-letter code: Photosystem II protein D1 (353 aa).

Thr2 is subject to N-acetylthreonine. Thr2 is modified (phosphothreonine). 3 helical membrane passes run 29-46, 118-133, and 142-156; these read YIGWFGVLMIPTLLTATS, HFLLGVACYMGREWEL, and WIAVAYSAPVAAATA. His118 contributes to the chlorophyll a binding site. Tyr126 is a binding site for pheophytin a. The [CaMn4O5] cluster site is built by Asp170 and Glu189. A helical membrane pass occupies residues 197-218; the sequence is FHMLGVAGVFGGSLFSAMHGSL. A chlorophyll a-binding site is contributed by His198. A quinone contacts are provided by residues His215 and 264-265; that span reads SF. Position 215 (His215) interacts with Fe cation. Position 272 (His272) interacts with Fe cation. The chain crosses the membrane as a helical span at residues 274–288; that stretch reads FLAAWPVIGIWFTAL. The [CaMn4O5] cluster site is built by His332, Glu333, Asp342, and Ala344. A propeptide spanning residues 345–353 is cleaved from the precursor; sequence AVEAPSTNG.

This sequence belongs to the reaction center PufL/M/PsbA/D family. As to quaternary structure, PSII is composed of 1 copy each of membrane proteins PsbA, PsbB, PsbC, PsbD, PsbE, PsbF, PsbH, PsbI, PsbJ, PsbK, PsbL, PsbM, PsbT, PsbX, PsbY, PsbZ, Psb30/Ycf12, at least 3 peripheral proteins of the oxygen-evolving complex and a large number of cofactors. It forms dimeric complexes. It depends on The D1/D2 heterodimer binds P680, chlorophylls that are the primary electron donor of PSII, and subsequent electron acceptors. It shares a non-heme iron and each subunit binds pheophytin, quinone, additional chlorophylls, carotenoids and lipids. D1 provides most of the ligands for the Mn4-Ca-O5 cluster of the oxygen-evolving complex (OEC). There is also a Cl(-1) ion associated with D1 and D2, which is required for oxygen evolution. The PSII complex binds additional chlorophylls, carotenoids and specific lipids. as a cofactor. Post-translationally, tyr-161 forms a radical intermediate that is referred to as redox-active TyrZ, YZ or Y-Z. C-terminally processed by CTPA; processing is essential to allow assembly of the oxygen-evolving complex and thus photosynthetic growth.

The protein resides in the plastid. It localises to the chloroplast thylakoid membrane. It catalyses the reaction 2 a plastoquinone + 4 hnu + 2 H2O = 2 a plastoquinol + O2. Photosystem II (PSII) is a light-driven water:plastoquinone oxidoreductase that uses light energy to abstract electrons from H(2)O, generating O(2) and a proton gradient subsequently used for ATP formation. It consists of a core antenna complex that captures photons, and an electron transfer chain that converts photonic excitation into a charge separation. The D1/D2 (PsbA/PsbD) reaction center heterodimer binds P680, the primary electron donor of PSII as well as several subsequent electron acceptors. The sequence is that of Photosystem II protein D1 from Buxus microphylla (Littleleaf boxwood).